The primary structure comprises 384 residues: Dual specificity protein phosphatase 5 (384 aa).

A Rhodanese domain is found at 19-141; it reads AEARCVVLDC…FYSQYPECCV (123 aa). Residues 53-74 carry the Nuclear localization signal motif; that stretch reads RRARGGAVSARYVLADEAARAR. A Tyrosine-protein phosphatase domain is found at 178–319; sequence GPVEILPFLY…LLQYESEILP (142 aa). Cys-263 functions as the Phosphocysteine intermediate in the catalytic mechanism.

The protein belongs to the protein-tyrosine phosphatase family. Non-receptor class dual specificity subfamily.

The protein localises to the nucleus. It carries out the reaction O-phospho-L-tyrosyl-[protein] + H2O = L-tyrosyl-[protein] + phosphate. It catalyses the reaction O-phospho-L-seryl-[protein] + H2O = L-seryl-[protein] + phosphate. The enzyme catalyses O-phospho-L-threonyl-[protein] + H2O = L-threonyl-[protein] + phosphate. Functionally, dual specificity protein phosphatase; active with phosphotyrosine, phosphoserine and phosphothreonine residues. The highest relative activity is toward ERK1. In Rattus norvegicus (Rat), this protein is Dual specificity protein phosphatase 5 (Dusp5).